We begin with the raw amino-acid sequence, 493 residues long: Probable UTP--glucose-1-phosphate uridylyltransferase (493 aa).

UTP contacts are provided by residues 105 to 108, glutamine 181, glycine 211, and aspartate 242; that span reads LTGK. 107 to 108 serves as a coordination point for substrate; it reads GK. 240 to 242 is a substrate binding site; that stretch reads NVD.

The protein belongs to the UDPGP type 1 family.

The enzyme catalyses alpha-D-glucose 1-phosphate + UTP + H(+) = UDP-alpha-D-glucose + diphosphate. In terms of biological role, plays a central role as a glucosyl donor in cellular metabolic pathways. The protein is Probable UTP--glucose-1-phosphate uridylyltransferase of Saccharomyces cerevisiae (strain ATCC 204508 / S288c) (Baker's yeast).